Consider the following 876-residue polypeptide: Radial spoke head 10 homolog B (876 aa).

2 stretches are compositionally biased toward basic and acidic residues: residues 1 to 16 (MVKEKKKADKKGDKSA) and 57 to 66 (PKRDSEHTYQ). The segment at 1-72 (MVKEKKKADK…HTYQSEDETQ (72 aa)) is disordered. MORN repeat units follow at residues 86–108 (YEGEKVRGLYEGEGFAVFQGGNT), 109–131 (YHGMFSEGLMHGQGTYIWADGLK), 132–154 (YEGDFVKNIPMNHGVYTWPDGST), 155–177 (YEGEVVNGMRNGFGMFKCGTQPV), 179–201 (YIGHWCHGKRHGKGSIYYNQEGT), 204–226 (YEGDWVYNIKKGWGIRCYKSGNI), 227–249 (YEGQWENNMRHGEGRMRWLTTNE), 251–273 (YTGHWEKGIQNGFGTHTWFLKRI), 284–306 (YIGAFVNGFRHGQGKFYYASGAM), and 307–329 (YEGEWVSNKKQGRGRITFKNGRV). 2 disordered regions span residues 360–386 (SQRSRQARGSSVSADREPETLRKLDGS) and 841–876 (EPPEVPAVQPLTPSPPKEDLVSMQTSKASPGKKKKK). A compositionally biased stretch (basic and acidic residues) spans 373 to 386 (ADREPETLRKLDGS). The stretch at 752 to 841 (EKYEKSKDEQ…FELDITVLKE (90 aa)) forms a coiled coil.

In terms of assembly, interacts with RSPH6A. Does not appear to be part of the axonemal radial spoke complexes 1 or 2.

The protein resides in the cytoplasm. Its subcellular location is the cytoskeleton. The protein localises to the cilium axoneme. It is found in the cell projection. It localises to the cilium. The protein resides in the flagellum. Functionally, may function as part of the axonemal radial spoke complex 3 (RS3). Radial spoke complexes are important for ciliary motility. This is Radial spoke head 10 homolog B (Rsph10b) from Rattus norvegicus (Rat).